A 171-amino-acid polypeptide reads, in one-letter code: S-ribosylhomocysteine lyase (171 aa).

The Fe cation site is built by His54, His58, and Cys128.

Belongs to the LuxS family. In terms of assembly, homodimer. Fe cation serves as cofactor.

The enzyme catalyses S-(5-deoxy-D-ribos-5-yl)-L-homocysteine = (S)-4,5-dihydroxypentane-2,3-dione + L-homocysteine. In terms of biological role, involved in the synthesis of autoinducer 2 (AI-2) which is secreted by bacteria and is used to communicate both the cell density and the metabolic potential of the environment. The regulation of gene expression in response to changes in cell density is called quorum sensing. Catalyzes the transformation of S-ribosylhomocysteine (RHC) to homocysteine (HC) and 4,5-dihydroxy-2,3-pentadione (DPD). In Citrobacter koseri (strain ATCC BAA-895 / CDC 4225-83 / SGSC4696), this protein is S-ribosylhomocysteine lyase.